Here is a 558-residue protein sequence, read N- to C-terminus: Transcription factor RelB (558 aa).

Over residues M1–A11 the composition is skewed to basic and acidic residues. The interval M1 to D21 is disordered. S19 bears the Phosphoserine mark. The leucine-zipper stretch occupies residues L22 to L50. Position 84 is a phosphothreonine (T84). Residues P103–V418 form the RHD domain. 2 consecutive short sequence motifs (nuclear localization signal) follow at residues K387–R391 and K411–K416. A Phosphoserine modification is found at S552.

In terms of assembly, component of the NF-kappa-B RelB-p50 complex. Component of the NF-kappa-B RelB-p52 complex. Self-associates; the interaction seems to be transient and may prevent degradation allowing for heterodimer formation p50 or p52. Interacts with NFKB1/p50, NFKB2/p52 and NFKB2/p100. Interacts with NFKBID. Interacts with BMAL1 and the interaction is enhanced in the presence of CLOCK. Phosphorylation at 'Thr-103' and 'Ser-573' is followed by proteasomal degradation. Expressed in intestine, thymus and spleen. Undetectable in liver, bome marrow, kidney and testis.

It localises to the nucleus. The protein resides in the cytoplasm. The protein localises to the cytoskeleton. Its subcellular location is the microtubule organizing center. It is found in the centrosome. In terms of biological role, NF-kappa-B is a pleiotropic transcription factor which is present in almost all cell types and is involved in many biological processed such as inflammation, immunity, differentiation, cell growth, tumorigenesis and apoptosis. NF-kappa-B is a homo- or heterodimeric complex formed by the Rel-like domain-containing proteins RELA/p65, RELB, NFKB1/p105, NFKB1/p50, REL and NFKB2/p52. The dimers bind at kappa-B sites in the DNA of their target genes and the individual dimers have distinct preferences for different kappa-B sites that they can bind with distinguishable affinity and specificity. Different dimer combinations act as transcriptional activators or repressors, respectively. NF-kappa-B is controlled by various mechanisms of post-translational modification and subcellular compartmentalization as well as by interactions with other cofactors or corepressors. NF-kappa-B complexes are held in the cytoplasm in an inactive state complexed with members of the NF-kappa-B inhibitor (I-kappa-B) family. In a conventional activation pathway, I-kappa-B is phosphorylated by I-kappa-B kinases (IKKs) in response to different activators, subsequently degraded thus liberating the active NF-kappa-B complex which translocates to the nucleus. NF-kappa-B heterodimeric RelB-p50 and RelB-p52 complexes are transcriptional activators. RELB neither associates with DNA nor with RELA/p65 or REL. Stimulates promoter activity in the presence of NFKB2/p49. As a member of the NUPR1/RELB/IER3 survival pathway, may allow the development of pancreatic intraepithelial neoplasias. Regulates the circadian clock by repressing the transcriptional activator activity of the CLOCK-BMAL1 heterodimer in a CRY1/CRY2 independent manner. Increased repression of the heterodimer is seen in the presence of NFKB2/p52. Is required for both T and B lymphocyte maturation and function. The protein is Transcription factor RelB (Relb) of Mus musculus (Mouse).